Reading from the N-terminus, the 351-residue chain is MNLVSLQNWLDNASFAVLFLTMLLYWIGAAFPGLPAINALGTAGMAIANLSIATLLGARWIEAGYFPLSNLYESLFFLSWGITTVHLIAENSSRSRLVGVFTTPVAMGIVAFATLTLPSDMQVSEPLVPALKSNWLMMHVSVMMLSYSALMVGSLLAIAFLVITRGNNIQLQGSSVGNGGYRTNGYRLMKAGELVSQPATPPVENNGFTRLESQNNGNSNTAVLNLATTPQTPTLTSTETLSPQRLSLAETLDNISYRIIGLGFPLLTIGIIAGAVWANEAWGSYWSWDPKETWALITWLVFAAYLHARITRGWQGRRPAILAASGFVVVWICYLGVNLLGKGLHSYGWFF.

A run of 8 helical transmembrane segments spans residues 17–37 (VLFL…LPAI), 38–58 (NALG…LLGA), 68–88 (LSNL…VHLI), 97–117 (LVGV…TLTL), 143–163 (MMLS…FLVI), 259–279 (IIGL…VWAN), 286–306 (WSWD…AAYL), and 320–340 (AILA…VNLL).

It belongs to the CcmF/CycK/Ccl1/NrfE/CcsA family. In terms of assembly, may interact with ccs1.

It is found in the cellular thylakoid membrane. In terms of biological role, required during biogenesis of c-type cytochromes (cytochrome c6 and cytochrome f) at the step of heme attachment. The sequence is that of Cytochrome c biogenesis protein CcsA from Nostoc sp. (strain PCC 7120 / SAG 25.82 / UTEX 2576).